The primary structure comprises 374 residues: Flagellar P-ring protein 1 (374 aa).

Positions 1–26 are cleaved as a signal peptide; the sequence is MVPNLMVIKKHLIGLLLILCPLSLQA.

This sequence belongs to the FlgI family. As to quaternary structure, the basal body constitutes a major portion of the flagellar organelle and consists of four rings (L,P,S, and M) mounted on a central rod.

The protein resides in the periplasm. It localises to the bacterial flagellum basal body. Assembles around the rod to form the L-ring and probably protects the motor/basal body from shearing forces during rotation. The polypeptide is Flagellar P-ring protein 1 (Photobacterium profundum (strain SS9)).